A 92-amino-acid chain; its full sequence is uncharacterized protein (92 aa).

The next 3 helical transmembrane spans lie at 1–21 (MEVLPLVSGICCILGGIGVIL), 29–49 (IIMLALLEIGMIGLIVSCYYL), and 51–71 (IAIVSSLCEPICTVILLLGYL).

Its subcellular location is the cell membrane. This is an uncharacterized protein from Methanocaldococcus jannaschii (strain ATCC 43067 / DSM 2661 / JAL-1 / JCM 10045 / NBRC 100440) (Methanococcus jannaschii).